Consider the following 350-residue polypeptide: MSKNKLSKGQQRRVNANHQRRLKTSAEKADYDDNLFGEPAEGIVISRLGMHADVESADGEVHRCNIRRTIRSLVTGDRVVWRPGKAAAEGVNVKGIVEAVHERTSVLTRPDFYDGVKPIAANIDQIVIVSAILPELSLNIIDRYLVGCETLQVEPLIVLNKIDLLDDEGMDFVNEQMDIYRNIGYRVLMVSSHTQDGLKPLEEALTGRISIFAGQSGVGKSSLLNALLGLQNEILTNDVSNVSGLGQHTTTAARLYHFPHGGDVIDSPGVREFGLWHLEPEQITQGFVEFHDYLGHCKYRDCKHDADPGCAIREAVENGAIAETRFENYHRILESMAQVKTRKNFSDTDD.

A compositionally biased stretch (polar residues) spans 1–17 (MSKNKLSKGQQRRVNAN). The disordered stretch occupies residues 1–27 (MSKNKLSKGQQRRVNANHQRRLKTSAE). Residues 104 to 273 (TSVLTRPDFY…VIDSPGVREF (170 aa)) enclose the CP-type G domain. GTP-binding positions include 160 to 163 (NKID) and 214 to 222 (GQSGVGKSS). Zn(2+) contacts are provided by Cys297, Cys302, His304, and Cys310.

The protein belongs to the TRAFAC class YlqF/YawG GTPase family. RsgA subfamily. As to quaternary structure, monomer. Associates with 30S ribosomal subunit, binds 16S rRNA. Requires Zn(2+) as cofactor.

It localises to the cytoplasm. Functionally, one of several proteins that assist in the late maturation steps of the functional core of the 30S ribosomal subunit. Helps release RbfA from mature subunits. May play a role in the assembly of ribosomal proteins into the subunit. Circularly permuted GTPase that catalyzes slow GTP hydrolysis, GTPase activity is stimulated by the 30S ribosomal subunit. This is Small ribosomal subunit biogenesis GTPase RsgA from Salmonella dublin (strain CT_02021853).